Here is a 92-residue protein sequence, read N- to C-terminus: WAP four-disulfide core domain protein 12 (92 aa).

An N-terminal signal peptide occupies residues 1–23 (MGSSRFLVLMVSLALVTLVAAEG). The WAP domain maps to 27-74 (NIEKPEVCPADNVRCIKSDPPQCHTDQDCQGIRKCCYLHCGFKCVIPV). 4 disulfide bridges follow: C34/C62, C41/C66, C49/C61, and C55/C70.

It localises to the secreted. In terms of biological role, antibacterial protein. Putative acid-stable proteinase inhibitor. This is WAP four-disulfide core domain protein 12 (WFDC12) from Aotus nancymaae (Ma's night monkey).